The sequence spans 484 residues: UDP-N-acetylmuramoyl-L-alanyl-D-glutamate--L-lysine ligase (484 aa).

S43 contacts UDP-N-acetyl-alpha-D-muramoyl-L-alanyl-D-glutamate. 119–125 (GTKGKTT) is a binding site for ATP. Residues 161 to 162 (TT), S188, and R196 each bind UDP-N-acetyl-alpha-D-muramoyl-L-alanyl-D-glutamate. Residue K230 is modified to N6-carboxylysine. The L-lysine recognition motif signature appears at 405 to 408 (DDPN).

Belongs to the MurCDEF family. MurE subfamily. Carboxylation is probably crucial for Mg(2+) binding and, consequently, for the gamma-phosphate positioning of ATP.

It is found in the cytoplasm. It carries out the reaction UDP-N-acetyl-alpha-D-muramoyl-L-alanyl-D-glutamate + L-lysine + ATP = UDP-N-acetyl-alpha-D-muramoyl-L-alanyl-gamma-D-glutamyl-L-lysine + ADP + phosphate + H(+). It functions in the pathway cell wall biogenesis; peptidoglycan biosynthesis. Functionally, catalyzes the addition of L-lysine to the nucleotide precursor UDP-N-acetylmuramoyl-L-alanyl-D-glutamate (UMAG) in the biosynthesis of bacterial cell-wall peptidoglycan. This Streptococcus agalactiae serotype V (strain ATCC BAA-611 / 2603 V/R) protein is UDP-N-acetylmuramoyl-L-alanyl-D-glutamate--L-lysine ligase.